The following is a 274-amino-acid chain: Large ribosomal subunit protein uL2 (274 aa).

Disordered stretches follow at residues 34–53 and 216–274; these read IAPI…TMRY and RRPR…RRKK.

Belongs to the universal ribosomal protein uL2 family. In terms of assembly, part of the 50S ribosomal subunit. Forms a bridge to the 30S subunit in the 70S ribosome.

Its function is as follows. One of the primary rRNA binding proteins. Required for association of the 30S and 50S subunits to form the 70S ribosome, for tRNA binding and peptide bond formation. It has been suggested to have peptidyltransferase activity; this is somewhat controversial. Makes several contacts with the 16S rRNA in the 70S ribosome. This Flavobacterium psychrophilum (strain ATCC 49511 / DSM 21280 / CIP 103535 / JIP02/86) protein is Large ribosomal subunit protein uL2.